The primary structure comprises 415 residues: uncharacterized protein (415 aa).

2 disordered regions span residues 329–351 and 388–415; these read KFNK…TESS and KSMM…IITL. Over residues 338-348 the composition is skewed to acidic residues; sequence LQNESGDDSET. Residues 399-409 are compositionally biased toward basic residues; the sequence is KSNRKSNKRSN.

This is an uncharacterized protein from Acanthamoeba polyphaga mimivirus (APMV).